Reading from the N-terminus, the 433-residue chain is Trigger factor (433 aa).

A PPIase FKBP-type domain is found at 163 to 248 (GDFVTFDFKG…IKEIKVKELP (86 aa)).

It belongs to the FKBP-type PPIase family. Tig subfamily.

Its subcellular location is the cytoplasm. It carries out the reaction [protein]-peptidylproline (omega=180) = [protein]-peptidylproline (omega=0). Its function is as follows. Involved in protein export. Acts as a chaperone by maintaining the newly synthesized protein in an open conformation. Functions as a peptidyl-prolyl cis-trans isomerase. This Geotalea uraniireducens (strain Rf4) (Geobacter uraniireducens) protein is Trigger factor.